The sequence spans 137 residues: Large ribosomal subunit protein uL16 (137 aa).

It belongs to the universal ribosomal protein uL16 family. In terms of assembly, part of the 50S ribosomal subunit.

In terms of biological role, binds 23S rRNA and is also seen to make contacts with the A and possibly P site tRNAs. This is Large ribosomal subunit protein uL16 from Spiroplasma kunkelii.